We begin with the raw amino-acid sequence, 334 residues long: Aspartate carbamoyltransferase catalytic subunit (334 aa).

Carbamoyl phosphate contacts are provided by Arg71 and Thr72. Lys99 provides a ligand contact to L-aspartate. Residues Arg121, His151, and Gln154 each coordinate carbamoyl phosphate. L-aspartate-binding residues include Arg184 and Arg239. Carbamoyl phosphate-binding residues include Gly280 and Pro281.

Belongs to the aspartate/ornithine carbamoyltransferase superfamily. ATCase family. As to quaternary structure, heterododecamer (2C3:3R2) of six catalytic PyrB chains organized as two trimers (C3), and six regulatory PyrI chains organized as three dimers (R2).

The enzyme catalyses carbamoyl phosphate + L-aspartate = N-carbamoyl-L-aspartate + phosphate + H(+). Its pathway is pyrimidine metabolism; UMP biosynthesis via de novo pathway; (S)-dihydroorotate from bicarbonate: step 2/3. In terms of biological role, catalyzes the condensation of carbamoyl phosphate and aspartate to form carbamoyl aspartate and inorganic phosphate, the committed step in the de novo pyrimidine nucleotide biosynthesis pathway. This Pseudomonas syringae pv. syringae (strain B728a) protein is Aspartate carbamoyltransferase catalytic subunit.